The sequence spans 330 residues: Lymphocyte-specific protein 1 (330 aa).

2 stretches are compositionally biased toward basic and acidic residues: residues 1–20 (MAEAAIDPRCEEQEELHAED) and 37–62 (AREQRQRERERQLQDQDKDKEDDGGH). Disordered stretches follow at residues 1-246 (MAEA…SIEL) and 281-302 (DMSKKSLWEQKGGSKISSTIKS). Positions 66-77 (QPGQQTLISLKS) are enriched in polar residues. A phosphoserine; by CK2 mark is found at serine 77 and serine 78. The segment covering 113–135 (QSERPEEKQTEESSHQAKVHLEE) has biased composition (basic and acidic residues). Threonine 166 carries the phosphothreonine modification. Serine 168, serine 179, serine 180, and serine 184 each carry phosphoserine. 2 stretches are compositionally biased toward polar residues: residues 206–215 (VKKSQPTLPI) and 223–242 (QQYTQATESSGRTPKLSRQP). Serine 243 bears the Phosphoserine; by MAPKAPK2 mark. Residues 291–302 (KGGSKISSTIKS) show a composition bias toward low complexity. N6-acetyllysine is present on lysine 318.

Phosphorylated by casein kinase II, protein kinase C and MAPKAPK2. Phosphorylation by PKC induces translocation from membrane to cytoplasm. Phosphorylation by MAPKAPK2 may regulate neutrophil chemotaxis. Isoform 1 is expressed in normal mouse B and T-lymphocytes and in transformed B-cells but not (or in smaller amounts) in nine T-lymphoma lines tested. Isoform 2 is expressed in non-lymphoid cell lines (myocytes, stromal cells, fibroblasts).

The protein resides in the cell membrane. May play a role in mediating neutrophil activation and chemotaxis. This chain is Lymphocyte-specific protein 1 (Lsp1), found in Mus musculus (Mouse).